A 409-amino-acid chain; its full sequence is Putative competence-damage inducible protein (409 aa).

Belongs to the CinA family.

The chain is Putative competence-damage inducible protein from Clostridium botulinum (strain Kyoto / Type A2).